Here is a 179-residue protein sequence, read N- to C-terminus: Large ribosomal subunit protein uL6 (179 aa).

It belongs to the universal ribosomal protein uL6 family. Part of the 50S ribosomal subunit.

Its function is as follows. This protein binds to the 23S rRNA, and is important in its secondary structure. It is located near the subunit interface in the base of the L7/L12 stalk, and near the tRNA binding site of the peptidyltransferase center. The polypeptide is Large ribosomal subunit protein uL6 (Rhodococcus opacus (strain B4)).